The following is a 70-amino-acid chain: Conotoxin Ep11.12 (70 aa).

An N-terminal signal peptide occupies residues 1–26; the sequence is MMFRVTSVGCFLLVILSLNLVVLTNA. 4 disulfide bridges follow: Cys27/Cys41, Cys34/Cys46, Cys40/Cys50, and Cys45/Cys54. Pro57 bears the Proline amide mark. Residues 61-70 constitute a propeptide that is removed on maturation; sequence AKLREFFRQR.

This sequence belongs to the conotoxin I2 superfamily. As to expression, expressed by the venom duct.

It is found in the secreted. This Conus episcopatus (Bishop's cone) protein is Conotoxin Ep11.12.